A 352-amino-acid chain; its full sequence is 7,8-didemethyl-8-hydroxy-5-deazariboflavin synthase (352 aa).

Residues 35–275 form the Radical SAM core domain; sequence ITFSKNAFIP…EGISIQVPPN (241 aa). [4Fe-4S] cluster-binding residues include Cys49, Cys53, and Cys56.

It belongs to the radical SAM superfamily. CofG family. In terms of assembly, consists of two subunits, CofG and CofH. Requires [4Fe-4S] cluster as cofactor.

The catalysed reaction is 5-amino-5-(4-hydroxybenzyl)-6-(D-ribitylimino)-5,6-dihydrouracil + S-adenosyl-L-methionine = 7,8-didemethyl-8-hydroxy-5-deazariboflavin + 5'-deoxyadenosine + L-methionine + NH4(+) + H(+). It functions in the pathway cofactor biosynthesis; coenzyme F0 biosynthesis. Its function is as follows. Catalyzes the radical-mediated synthesis of 7,8-didemethyl-8-hydroxy-5-deazariboflavin from 5-amino-5-(4-hydroxybenzyl)-6-(D-ribitylimino)-5,6-dihydrouracil. This chain is 7,8-didemethyl-8-hydroxy-5-deazariboflavin synthase, found in Methanococcus maripaludis (strain C5 / ATCC BAA-1333).